Consider the following 206-residue polypeptide: Sclerostin domain-containing protein 1 (206 aa).

Positions 1–23 (MLPPAIHFYLLPLACILMKSCLA) are cleaved as a signal peptide. A glycan (N-linked (GlcNAc...) asparagine) is linked at Asn-47. 4 cysteine pairs are disulfide-bonded: Cys-75-Cys-133, Cys-89-Cys-147, Cys-100-Cys-163, and Cys-104-Cys-165. Residues 75 to 170 (CRELRSTKYI…TACKCKRYTR (96 aa)) form the CTCK domain. A glycan (N-linked (GlcNAc...) asparagine) is linked at Asn-173. Positions 174-206 (ESSHNFESMSPAKPVQHHRERKRASKSSKHSMS) are disordered. A compositionally biased stretch (basic residues) spans 188–206 (VQHHRERKRASKSSKHSMS).

Belongs to the sclerostin family. In terms of assembly, interacts with BMP2, BMP4, BMP6 and BMP7 with high affinity. As to expression, highly expressed in kidney and weakly in lung.

The protein resides in the secreted. In terms of biological role, may be involved in the onset of endometrial receptivity for implantation/sensitization for the decidual cell reaction Enhances Wnt signaling and inhibits TGF-beta signaling. Directly antagonizes activity of BMP2, BMP4, BMP6 and BMP7 in a dose-dependent manner. In Homo sapiens (Human), this protein is Sclerostin domain-containing protein 1 (SOSTDC1).